The primary structure comprises 273 residues: 4-hydroxy-tetrahydrodipicolinate reductase (273 aa).

NAD(+) is bound by residues 12–17 (GAGGRM) and Glu-38. Arg-39 contacts NADP(+). Residues 102–104 (GTT) and 126–129 (AANF) each bind NAD(+). His-159 (proton donor/acceptor) is an active-site residue. Residue His-160 participates in (S)-2,3,4,5-tetrahydrodipicolinate binding. The active-site Proton donor is Lys-163. A (S)-2,3,4,5-tetrahydrodipicolinate-binding site is contributed by 169–170 (GT).

Belongs to the DapB family. In terms of assembly, homotetramer.

It localises to the cytoplasm. The catalysed reaction is (S)-2,3,4,5-tetrahydrodipicolinate + NAD(+) + H2O = (2S,4S)-4-hydroxy-2,3,4,5-tetrahydrodipicolinate + NADH + H(+). The enzyme catalyses (S)-2,3,4,5-tetrahydrodipicolinate + NADP(+) + H2O = (2S,4S)-4-hydroxy-2,3,4,5-tetrahydrodipicolinate + NADPH + H(+). The protein operates within amino-acid biosynthesis; L-lysine biosynthesis via DAP pathway; (S)-tetrahydrodipicolinate from L-aspartate: step 4/4. In terms of biological role, catalyzes the conversion of 4-hydroxy-tetrahydrodipicolinate (HTPA) to tetrahydrodipicolinate. This Yersinia pseudotuberculosis serotype O:1b (strain IP 31758) protein is 4-hydroxy-tetrahydrodipicolinate reductase.